The following is a 586-amino-acid chain: A-type ATP synthase subunit A (586 aa).

232–239 (GPFGSGKT) is an ATP binding site.

It belongs to the ATPase alpha/beta chains family. As to quaternary structure, has multiple subunits with at least A(3), B(3), C, D, E, F, H, I and proteolipid K(x).

Its subcellular location is the cell membrane. It carries out the reaction ATP + H2O + 4 H(+)(in) = ADP + phosphate + 5 H(+)(out). Functionally, component of the A-type ATP synthase that produces ATP from ADP in the presence of a proton gradient across the membrane. The A chain is the catalytic subunit. The chain is A-type ATP synthase subunit A from Methanococcus maripaludis (strain C7 / ATCC BAA-1331).